Reading from the N-terminus, the 422-residue chain is Vitamin D3 receptor (422 aa).

A DNA-binding region (nuclear receptor) is located at residues 22–90 (PRICGVCGDK…RLKRCVDIGM (69 aa)). Residues Cys-25, Cys-28, Cys-42, Cys-45, Cys-61, Cys-67, Cys-77, and Cys-80 each contribute to the Zn(2+) site. 2 consecutive NR C4-type zinc fingers follow at residues 25–45 (CGVC…CEGC) and 61–85 (CPFN…LKRC). Residues 98–127 (DEEVQRKRQMINKRKSEEALKESMRPKISD) are hinge. Residues 128–418 (EQQKMIDILL…LTPLMLEVFS (291 aa)) form the NR LBD domain. The disordered stretch occupies residues 170 to 191 (RSSSVHTQGSPSEDSDVFTSSP). Position 232 (Ser-232) interacts with calcitriol. The interval 241 to 259 (KMIPGFRDLIAEDQIALLK) is interaction with coactivator LXXLL motif. Arg-269, Ser-273, His-300, and His-392 together coordinate calcitriol. The 9aaTAD motif lies at 411–419 (PLMLEVFSD).

Belongs to the nuclear hormone receptor family. NR1 subfamily. Homodimer in the absence of bound vitamin D3. Heterodimer with RXRA after vitamin D3 binding. As to expression, detected in all tissues examined. Highest level in small intestine and skin.

It is found in the nucleus. It localises to the cytoplasm. Functionally, nuclear receptor for calcitriol, the active form of vitamin D3 which mediates the action of this vitamin on cells. Enters the nucleus upon vitamin D3 binding where it forms heterodimers with the retinoid X receptor/RXR. The VDR-RXR heterodimers bind to specific response elements on DNA and activate the transcription of vitamin D3-responsive target genes. Plays a central role in calcium homeostasis. Also functions as a receptor for the secondary bile acid lithocholic acid (LCA) and its metabolites. This chain is Vitamin D3 receptor (vdr), found in Xenopus laevis (African clawed frog).